Consider the following 287-residue polypeptide: ATP synthase gamma chain (287 aa).

Belongs to the ATPase gamma chain family. As to quaternary structure, F-type ATPases have 2 components, CF(1) - the catalytic core - and CF(0) - the membrane proton channel. CF(1) has five subunits: alpha(3), beta(3), gamma(1), delta(1), epsilon(1). CF(0) has three main subunits: a, b and c.

It is found in the cell inner membrane. In terms of biological role, produces ATP from ADP in the presence of a proton gradient across the membrane. The gamma chain is believed to be important in regulating ATPase activity and the flow of protons through the CF(0) complex. The polypeptide is ATP synthase gamma chain (Salmonella gallinarum (strain 287/91 / NCTC 13346)).